The sequence spans 385 residues: Aspartate carbamoyltransferase 2, chloroplastic (385 aa).

The N-terminal 30 residues, 1 to 30 (MTASSSLFSCSMHMEVLTPKISKWPKNFVS), are a transit peptide targeting the chloroplast. The carbamoyl phosphate site is built by arginine 131 and threonine 132. UMP is bound by residues arginine 131 and threonine 132. Lysine 161 contacts L-aspartate. Arginine 182, histidine 210, and glutamine 213 together coordinate carbamoyl phosphate. UMP contacts are provided by arginine 182 and histidine 210. 2 residues coordinate UMP: arginine 243 and arginine 305. L-aspartate is bound by residues arginine 243 and arginine 305. Residues leucine 345 and proline 346 each coordinate carbamoyl phosphate.

This sequence belongs to the aspartate/ornithine carbamoyltransferase superfamily. ATCase family. In terms of assembly, homotrimer.

It is found in the plastid. It localises to the chloroplast. The catalysed reaction is carbamoyl phosphate + L-aspartate = N-carbamoyl-L-aspartate + phosphate + H(+). It functions in the pathway pyrimidine metabolism; UMP biosynthesis via de novo pathway; (S)-dihydroorotate from bicarbonate: step 2/3. Its activity is regulated as follows. Feedback inhibited by UMP. Its function is as follows. Catalyzes the condensation of carbamoyl phosphate and aspartate to form carbamoyl aspartate and inorganic phosphate, the committed step in the de novo pyrimidine nucleotide biosynthesis pathway. The chain is Aspartate carbamoyltransferase 2, chloroplastic (PYRB2) from Pisum sativum (Garden pea).